We begin with the raw amino-acid sequence, 139 residues long: MALRMLWAGQAKGILGGWRTICLVVSLFLQHPGVSSKCYFQAQAPCHYEGKYFTLGESWLRKDCFHCTCLHPVGVGCCDTAQHPIDFPAECEVLQEAGTCQFSLVQKADPRLPCKGGGPDLEWGSANTPAPGASAPHSS.

Residues 1–35 form the signal peptide; that stretch reads MALRMLWAGQAKGILGGWRTICLVVSLFLQHPGVS. 5 disulfide bridges follow: cysteine 38–cysteine 78, cysteine 46–cysteine 69, cysteine 64–cysteine 100, cysteine 67–cysteine 77, and cysteine 91–cysteine 114. Residues 116 to 139 form a disordered region; sequence GGGPDLEWGSANTPAPGASAPHSS.

The protein belongs to the beta-microseminoprotein family.

Its subcellular location is the secreted. In terms of biological role, acts as a ligand for C-C chemokine receptor CCR2. Signals through binding and activation of CCR2 and induces a strong chemotactic response and mobilization of intracellular calcium ions. Exhibits a chemotactic activity for monocytes and lymphocytes but not neutrophils. This chain is Prostate-associated microseminoprotein (Msmp), found in Mus musculus (Mouse).